A 1292-amino-acid polypeptide reads, in one-letter code: DNA-directed RNA polymerase subunit beta' (1292 aa).

Zn(2+) is bound by residues C70, C72, C85, and C88. Mg(2+) contacts are provided by D532, D534, and D536. 4 residues coordinate Zn(2+): C911, C987, C994, and C997.

It belongs to the RNA polymerase beta' chain family. In terms of assembly, the RNAP catalytic core consists of 2 alpha, 1 beta, 1 beta' and 1 omega subunit. When a sigma factor is associated with the core the holoenzyme is formed, which can initiate transcription. Requires Mg(2+) as cofactor. The cofactor is Zn(2+).

The enzyme catalyses RNA(n) + a ribonucleoside 5'-triphosphate = RNA(n+1) + diphosphate. Its function is as follows. DNA-dependent RNA polymerase catalyzes the transcription of DNA into RNA using the four ribonucleoside triphosphates as substrates. The protein is DNA-directed RNA polymerase subunit beta' of Mycoplasma genitalium (strain ATCC 33530 / DSM 19775 / NCTC 10195 / G37) (Mycoplasmoides genitalium).